The primary structure comprises 183 residues: Globin-like protein 26 (183 aa).

The tract at residues 1-25 (MGSSTSTPAPPPKKNKPEGRKADNQ) is disordered. A lipid anchor (N-myristoyl glycine) is attached at Gly-2. Positions 12 to 18 (PKKNKPE) match the Nuclear localization signal motif. The Globin domain occupies 26–166 (ILNSYQKSIV…VVDQLRFGYS (141 aa)). Heme is bound by residues His-77 and His-109.

This sequence belongs to the globin family. In terms of assembly, homodimer. Occurs in an equilibrium of monomeric and dimeric forms in solution. Detected in the head mesodermal cell. In the tail region, detected in the stomatointestinal and anal depressor muscle cells.

Its subcellular location is the cytoplasm. The protein resides in the nucleus lamina. It localises to the cell membrane. In terms of biological role, plays a role in electron transport. Utilizes the bis-histidyl hexacoordinated complex with iron to transfer electrons to cytochrome c and molecular oxygen. Plays a regulatory role in the periodicity of the defecation cycle under oxidative stress conditions. Not involved in imparting protection against general conditions of oxidative stress. May participate in redox reactions under anaerobic conditions. The polypeptide is Globin-like protein 26 (Caenorhabditis elegans).